A 205-amino-acid chain; its full sequence is tRNA 2-(methylsulfanyl)-N(6)-isopentenyladenosine(37) hydroxylase (205 aa).

Glu-38, Glu-69, His-72, Glu-122, Glu-151, and His-154 together coordinate Fe cation.

It belongs to the MiaE family. In terms of assembly, homodimer. The cofactor is Fe cation.

It catalyses the reaction 2-methylsulfanyl-N(6)-dimethylallyladenosine(37) in tRNA + AH2 + O2 = N(6)-[(2E)-4-hydroxy-3-methylbut-2-en-1-yl]-2-(methylsulfanyl)adenosine(37) in tRNA + A + H2O. It participates in tRNA modification; 2-methylthio-N-6-(cis-hydroxy)isopentenyl adenosine-tRNA biosynthesis. Its function is as follows. Involved in specific tRNA modification. Catalyzes the oxygen-dependent hydroxylation of 2-methylthio-N-6-isopentenyl adenosine (ms2i6A) to produce 2-methylthio-N-6-(cis-hydroxy)isopentenyl adenosine (ms2io6A) at position 37 in tRNAs. This is tRNA 2-(methylsulfanyl)-N(6)-isopentenyladenosine(37) hydroxylase from Pseudomonas putida (strain ATCC 47054 / DSM 6125 / CFBP 8728 / NCIMB 11950 / KT2440).